The chain runs to 510 residues: Protein fork head (510 aa).

2 disordered regions span residues 1 to 62 and 175 to 205; these read MQKL…SPLA and AMPP…YRRS. Over residues 20-39 the composition is skewed to gly residues; it reads SGGGGPPSGGGGGGGGGGGG. Residues 47–60 show a composition bias toward low complexity; the sequence is NNPNPTSNGGSMSP. Residues S187 and S190 each carry the phosphoserine modification. The segment at residues 209–300 is a DNA-binding region (fork-head); sequence AKPPYSYISL…GNMFENGCYL (92 aa). Residues 309-359 are disordered; the sequence is EKKEAIRQLHKSPSHSSLEATSPGKKDHEDSHHMHHHHHSRLDHHQHHKEA. 3 positions are modified to phosphoserine: S320, S322, and S330. Residues 341-356 are compositionally biased toward basic residues; it reads HMHHHHHSRLDHHQHH.

It localises to the nucleus. Fkh promotes terminal as opposed to segmental development. In the absence of fkh, this developmental switch does not occur. The nuclear localization of the fkh protein suggest that fkh regulates the transcription of other, subordinate, genes. This is Protein fork head (fkh) from Drosophila melanogaster (Fruit fly).